Here is a 503-residue protein sequence, read N- to C-terminus: ATP synthase subunit alpha, chloroplastic (503 aa).

Gly-170–Thr-177 is an ATP binding site.

This sequence belongs to the ATPase alpha/beta chains family. As to quaternary structure, F-type ATPases have 2 components, CF(1) - the catalytic core - and CF(0) - the membrane proton channel. CF(1) has five subunits: alpha(3), beta(3), gamma(1), delta(1), epsilon(1). CF(0) has four main subunits: a, b, b' and c.

It is found in the plastid. It localises to the chloroplast thylakoid membrane. It carries out the reaction ATP + H2O + 4 H(+)(in) = ADP + phosphate + 5 H(+)(out). Its function is as follows. Produces ATP from ADP in the presence of a proton gradient across the membrane. The alpha chain is a regulatory subunit. In Thalassiosira pseudonana (Marine diatom), this protein is ATP synthase subunit alpha, chloroplastic.